The sequence spans 528 residues: Protein arginine N-methyltransferase 3 (528 aa).

A disordered region spans residues 1-43; sequence MCSLAAGNGRGAELGPEPLELSDSGDDAGWEDEDADTEPAHGR. The residue at position 2 (Cys-2) is an N-acetylcysteine. 2 positions are modified to phosphoserine: Ser-22 and Ser-24. Residues 23 to 37 are compositionally biased toward acidic residues; that stretch reads DSGDDAGWEDEDADT. Residues 46–69 form a C2H2-type zinc finger; the sequence is TPCLFCDRLFASAEETFSHCKLEH. The residue at position 169 (Ser-169) is a Phosphoserine. The tract at residues 184 to 528 is mediates interaction with ALDH1A1; it reads MKQFAQDFVM…NSSTQTYSLQ (345 aa). The 315-residue stretch at 214–528 folds into the SAM-dependent MTase PRMT-type domain; sequence DGVYFSSYGH…NSSTQTYSLQ (315 aa). S-adenosyl-L-homocysteine-binding residues include Arg-236, Gly-260, Asp-282, Ser-284, Ile-310, and Glu-311. Catalysis depends on residues Glu-326 and Glu-335.

This sequence belongs to the class I-like SAM-binding methyltransferase superfamily. Protein arginine N-methyltransferase family. Monomer and homodimer. Interacts with EPB41L3 (via FERM domain); the interaction is direct and inhibits the protein-arginine N-methyltransferase activity of PRMT3. Interacts with the 40S ribosomal protein RPS2. Interacts with ALDH1A1; the interaction is direct, inhibits ALDH1A1 aldehyde dehydrogenase activity and is independent of the methyltransferase activity of PRMT3.

Its subcellular location is the cytoplasm. It localises to the cytosol. It is found in the nucleus. It carries out the reaction L-arginyl-[protein] + S-adenosyl-L-methionine = N(omega)-methyl-L-arginyl-[protein] + S-adenosyl-L-homocysteine + H(+). The enzyme catalyses L-arginyl-[protein] + 2 S-adenosyl-L-methionine = N(omega),N(omega)-dimethyl-L-arginyl-[protein] + 2 S-adenosyl-L-homocysteine + 2 H(+). Inhibited by N-ethylmaleimide and high concentrations of zinc chloride. Its function is as follows. Protein-arginine N-methyltransferase that catalyzes both the monomethylation and asymmetric dimethylation of the guanidino nitrogens of arginine residues in target proteins, and therefore falls into the group of type I methyltransferases. Catalyzes the asymmetric arginine dimethylation at multiple sites in the Arg/Gly-rich region of small ribosomal subunit protein uS5/RPS2. Also appears to methylate other ribosomal proteins. May regulate retinoic acid synthesis and signaling by inhibiting ALDH1A1 retinal dehydrogenase activity. Contributes to methylation of histone H4 'Arg-3', a specific tag for epigenetic transcriptional activation. Promotes osteogenesis. This Mus musculus (Mouse) protein is Protein arginine N-methyltransferase 3.